The sequence spans 2162 residues: Polyketide synthase 1 (2162 aa).

The segment at 19–264 is N-terminal acylcarrier protein transacylase domain (SAT); sequence FVFGDQTSCN…TPLAVHAPYH (246 aa). Residues 397–841 form the Ketosynthase family 3 (KS3) domain; the sequence is DSKIAIIGMS…GGNTALLVED (445 aa). Residues C578, H713, and H757 each act as for beta-ketoacyl synthase activity in the active site. Residues 941–1245 form a malonyl-CoA:ACP transacylase (MAT) domain region; sequence AFVFSGQGSQ…PSLMRSHDGW (305 aa). Residue S1030 is the For acyl/malonyl transferase activity of the active site. Positions 1322 to 1636 are product template (PT) domain; it reads TASVHRIVRE…RRVLDAAMPA (315 aa). Residues 1326 to 1459 are N-terminal hotdog fold; that stretch reads HRIVRESVDR…SSLCFGESRA (134 aa). Residues 1326–1631 enclose the PKS/mFAS DH domain; that stretch reads HRIVRESVDR…FQGVPRRVLD (306 aa). H1358 serves as the catalytic Proton acceptor; for dehydratase activity. Residues 1486–1631 form a C-terminal hotdog fold region; the sequence is LNSRLSSGVI…FQGVPRRVLD (146 aa). D1545 (proton donor; for dehydratase activity) is an active-site residue. The tract at residues 1633 to 1669 is disordered; the sequence is AMPAPKSPNKTRDHASPNATISRAKPPQGSSPASSAQ. Low complexity predominate over residues 1658-1669; it reads PPQGSSPASSAQ. The Carrier 1 domain occupies 1692–1766; sequence IDPMHAVLRI…DFAVHLGLDT (75 aa). An O-(pantetheine 4'-phosphoryl)serine modification is found at S1726. Residues 1772–1783 show a composition bias toward low complexity; sequence SSGESNVSGGVS. The disordered stretch occupies residues 1772–1809; the sequence is SSGESNVSGGVSPRSDSVAAMSSDVTTPPAQSPLGSMS. Residues 1794–1809 are compositionally biased toward polar residues; the sequence is SDVTTPPAQSPLGSMS. One can recognise a Carrier 2 domain in the interval 1807–1884; sequence SMSSSPCEDL…SFKHVFEQEI (78 aa). At S1844 the chain carries O-(pantetheine 4'-phosphoryl)serine. The tract at residues 1896–2160 is thioesterase (TE) domain; that stretch reads LKKYHATSTL…ERVAAFIRSA (265 aa). S1987 acts as the For thioesterase activity in catalysis.

In terms of biological role, polyketide synthase; part of the Pks1 gene cluster that mediates the biosynthesis of an anthraquinone derivative pigment that contributes to conidial pigmentation that provides protection from UV radiation, heat and cold stress. The polyketide synthase Pks1 produces 1-acetyl-2,4,6,8-tetrahydroxy-9,10-anthraquinone though condensation of acetyl-CoA with malonyl-CoA. The dehydratase EthD and the laccase Mlac1 further convert the anthraquinone derivative into the final conidial pigment. The protein is Polyketide synthase 1 of Metarhizium album (strain ARSEF 1941).